Reading from the N-terminus, the 592-residue chain is Bifunctional dolabella-3,7-dien-18-ol synthase/dolathalia-3,7,11-triene synthase TPS20, chloroplastic (592 aa).

The N-terminal 52 residues, 1 to 52 (MEAITKNGSLSQTLVHCGPKSLSSFIPVRCLRFSKNPFPKKLVVTRARTSIN), are a transit peptide targeting the chloroplast. The Mg(2+) site is built by D349, D353, D491, T495, and E499. The DDXXD motif signature appears at 349 to 353 (DDLYD).

The protein belongs to the terpene synthase family. Tpsa subfamily. The cofactor is Mg(2+). Mn(2+) is required as a cofactor.

It localises to the plastid. It is found in the chloroplast. The enzyme catalyses (2E,6E,10E)-geranylgeranyl diphosphate + H2O = (3E,7E)-dolabella-3,7-dien-18-ol + diphosphate. It carries out the reaction (2E,6E,10E)-geranylgeranyl diphosphate = (3E,7E)-dolathalia-3,7,11-triene + diphosphate. It participates in secondary metabolite biosynthesis; terpenoid biosynthesis. In terms of biological role, involved in the biosynthesis of diterpenes in roots. Possesses dolabella-3,7-dien-18-ol synthase activity and dolathalia-3,7,11-triene synthase activity in vitro. Catalyzes the formation of dolabella-3,7-dien-18-ol and dolathalia-3,7,11-triene from geranygeranyl diphosphate (GGPP). Does not seem to be involved in sesquiterpene biosynthesis. In Arabidopsis thaliana (Mouse-ear cress), this protein is Bifunctional dolabella-3,7-dien-18-ol synthase/dolathalia-3,7,11-triene synthase TPS20, chloroplastic.